The chain runs to 108 residues: Phosphoribosyl-ATP pyrophosphatase (108 aa).

It belongs to the PRA-PH family.

The protein localises to the cytoplasm. The catalysed reaction is 1-(5-phospho-beta-D-ribosyl)-ATP + H2O = 1-(5-phospho-beta-D-ribosyl)-5'-AMP + diphosphate + H(+). It participates in amino-acid biosynthesis; L-histidine biosynthesis; L-histidine from 5-phospho-alpha-D-ribose 1-diphosphate: step 2/9. In Geobacter sulfurreducens (strain ATCC 51573 / DSM 12127 / PCA), this protein is Phosphoribosyl-ATP pyrophosphatase.